Here is a 1486-residue protein sequence, read N- to C-terminus: Protein PRRC2B (1486 aa).

5 disordered regions span residues 1-20 (MSDR…KYST), 39-306 (VIPR…FPLP), 320-341 (QMND…PLRQ), 385-519 (KFSD…AREE), and 531-658 (LDQK…EQLY). Polar residues predominate over residues 88–137 (ANKQDQQDPKSSSVTASQPPESQPQPGLQKSVSNLQKPTQSISQENTNSV). Residues serine 166, serine 168, serine 222, and serine 226 each carry the phosphoserine modification. Residues 219–235 (SAASLSASPTELGSRNA) show a composition bias toward polar residues. Threonine 228 is modified (phosphothreonine). Lysine 251 is covalently cross-linked (Glycyl lysine isopeptide (Lys-Gly) (interchain with G-Cter in SUMO2)). The span at 288 to 300 (SPQSSENQTTVER) shows a compositional bias: polar residues. Serine 387 and serine 415 each carry phosphoserine. Composition is skewed to basic and acidic residues over residues 422 to 433 (TDAKRTQEEGKD), 478 to 488 (HSAEDKEDKPP), and 501 to 519 (AVER…AREE). A Phosphoserine modification is found at serine 479. Residues 494 to 544 (IQSEMSEAVERARKRREEEERRAREERLAACAAKLKQLDQKCRQAQKANET) adopt a coiled-coil conformation. Serine 555 carries the phosphoserine modification. The span at 600-611 (SNSSSSSSSSSS) shows a compositional bias: low complexity. Phosphoserine is present on serine 621. Positions 638–656 (QRQQQQQQQQQQQQQQQEQ) are enriched in low complexity. Residue lysine 751 forms a Glycyl lysine isopeptide (Lys-Gly) (interchain with G-Cter in SUMO2) linkage. The residue at position 753 (threonine 753) is a Phosphothreonine. Residues serine 762 and serine 793 each carry the phosphoserine modification. Disordered regions lie at residues 792–847 (RSPD…EARK), 893–918 (EERR…IPPR), and 950–1080 (ALPV…PGAV). Positions 880-904 (IEVLTKKQRRLLEEERRKKEQAAQV) form a coiled coil. Residues 960–986 (SWRTAVTAFSSTEPGTSEQGFKSSQGD) show a composition bias toward polar residues. Positions 998–1007 (SSATSSQRSS) are enriched in low complexity. Composition is skewed to basic and acidic residues over residues 1025–1055 (SKAD…EHRP) and 1062–1074 (RSLK…EGAE). Residues serine 1070 and serine 1159 each carry the phosphoserine modification. Disordered regions lie at residues 1177 to 1205 (KAWE…SSVG), 1410 to 1443 (QSIQ…TSRE), and 1455 to 1486 (ADSK…AWEP). Polar residues predominate over residues 1181 to 1191 (NSPSLPEQSSP). The span at 1410-1421 (QSIQLPPGQSLS) shows a compositional bias: low complexity. Positions 1457–1474 (SKQNVPTGGSAPSPQAYR) are enriched in polar residues.

The protein is Protein PRRC2B (Prrc2b) of Mus musculus (Mouse).